The primary structure comprises 153 residues: Pheromone-binding protein Gp-9 (153 aa).

The N-terminal stretch at 1 to 19 (MKTFVLHIFIFALVAFASA) is a signal peptide. Intrachain disulfides connect C37–C77, C73–C129, and C118–C138.

It belongs to the PBP/GOBP family. In terms of assembly, homodimer.

It localises to the secreted. In terms of biological role, colony queen number, a major feature of social organization, is associated with worker genotype for Gp-9. Colonies are headed by either a single reproductive queen (monogyne form) or multiple queens (polygyne form). Differences in worker Gp-9 genotypes between social forms may cause differences in workers' abilities to recognize queens and regulate their numbers. This Solenopsis invicta (Red imported fire ant) protein is Pheromone-binding protein Gp-9.